Here is a 174-residue protein sequence, read N- to C-terminus: RNA pyrophosphohydrolase (174 aa).

One can recognise a Nudix hydrolase domain in the interval 6–149 (GYRPNVGIIL…KRDVYLGALK (144 aa)). The Nudix box signature appears at 38–59 (GGIKPGESPETAMYRELYEEVG).

Belongs to the Nudix hydrolase family. RppH subfamily. Requires a divalent metal cation as cofactor.

Accelerates the degradation of transcripts by removing pyrophosphate from the 5'-end of triphosphorylated RNA, leading to a more labile monophosphorylated state that can stimulate subsequent ribonuclease cleavage. This is RNA pyrophosphohydrolase from Neisseria meningitidis serogroup B (strain ATCC BAA-335 / MC58).